The primary structure comprises 289 residues: Homoserine kinase (289 aa).

ATP is bound at residue 79-89; the sequence is PLARGLGSSSS.

It belongs to the GHMP kinase family. Homoserine kinase subfamily.

It localises to the cytoplasm. The catalysed reaction is L-homoserine + ATP = O-phospho-L-homoserine + ADP + H(+). It functions in the pathway amino-acid biosynthesis; L-threonine biosynthesis; L-threonine from L-aspartate: step 4/5. In terms of biological role, catalyzes the ATP-dependent phosphorylation of L-homoserine to L-homoserine phosphate. This Streptococcus pneumoniae (strain Taiwan19F-14) protein is Homoserine kinase.